The chain runs to 218 residues: Epoxyqueuosine reductase QueH (218 aa).

Residues Cys22, Cys23, Cys101, and Cys104 each coordinate [4Fe-4S] cluster. Cysteines 184 and 186 form a disulfide.

This sequence belongs to the QueH family.

The catalysed reaction is epoxyqueuosine(34) in tRNA + AH2 = queuosine(34) in tRNA + A + H2O. It participates in tRNA modification; tRNA-queuosine biosynthesis. Its function is as follows. Catalyzes the conversion of epoxyqueuosine (oQ) to queuosine (Q), which is a hypermodified base found in the wobble positions of tRNA(Asp), tRNA(Asn), tRNA(His) and tRNA(Tyr). The sequence is that of Epoxyqueuosine reductase QueH from Acinetobacter baylyi (strain ATCC 33305 / BD413 / ADP1).